The following is a 488-amino-acid chain: MYKSIFKTTGRLGKTVSSRNFVTTLPKPLATSSSPATNAPNKTSNPKTGELHVSTPVDTAKISIEPPEGSSISLKSASRDASLFGTRPIYLDVQATTPVDPRVLDKMLEFYTGLYGNPHSSTHAYGWETDKEVEKARTYIADVINADPKEIIFTSGATETNNMAIKGVPRFYKKTKKHIITTQTEHKCVLDSARHMQDEGFEVTYLPVSSEGLINLDDLKKAIRKDTVLVSIMAVNNEIGVIQPLKEIGKICRENKVFFHTDAAQAYGKIPIDVNEMNIDLLSISSHKIYGPKGIGACYVRRRPRVRLDPIITGGGQERGLRSGTLAPPLVAGFGEAARLMKQESSFDKRHIEKLSSKLKNGLLSIPSTQFNGCNDAKSQYPGCVNVSFAYIEGESLLMALKDIALSSGSACTSASLEPSYVLHALGADDALAHSSIRFGIGRFTTEAEVDYVIQAINERVDFLRKMSPLWEMVQEGIDLNTIEWSGH.

The disordered stretch occupies residues 25 to 52; that stretch reads LPKPLATSSSPATNAPNKTSNPKTGELH. Residues 30–47 show a composition bias toward polar residues; it reads ATSSSPATNAPNKTSNPK. Residues 157-158, N237, Q265, and 285-287 each bind pyridoxal 5'-phosphate; these read AT and SSH. The residue at position 288 (K288) is an N6-(pyridoxal phosphate)lysine. T325 lines the pyridoxal 5'-phosphate pocket. The active-site Cysteine persulfide intermediate is C412. Position 412 (C412) interacts with [2Fe-2S] cluster.

It belongs to the class-V pyridoxal-phosphate-dependent aminotransferase family. NifS/IscS subfamily. Pyridoxal 5'-phosphate serves as cofactor.

The protein resides in the mitochondrion. The enzyme catalyses (sulfur carrier)-H + L-cysteine = (sulfur carrier)-SH + L-alanine. In terms of biological role, catalyzes the removal of elemental sulfur from cysteine to produce alanine. It supplies the inorganic sulfur for iron-sulfur (Fe-S) clusters. Plays a role in both tRNA-processing and mitochondrial metabolism. Involved in the 2-thio-modification of both 5-carboxymethylaminomethyl-2-thiouridine in mitochondrial tRNAs and 5-methoxycarbonylmethyl-2-thiouridine (mcm5s2U) in cytoplasmic tRNAs. This chain is Cysteine desulfurase, mitochondrial (NFS1), found in Candida albicans (strain SC5314 / ATCC MYA-2876) (Yeast).